A 201-amino-acid polypeptide reads, in one-letter code: Probable GTP-binding protein EngB (201 aa).

Positions 22-197 (TFPEYAFIGR…LNYIESINKE (176 aa)) constitute an EngB-type G domain. Residues 30-37 (GRSNVGKS), 57-61 (GKTML), 75-78 (DLPG), 142-145 (TKAD), and 175-178 (ITSS) each bind GTP. Residues Ser37 and Thr59 each coordinate Mg(2+).

Belongs to the TRAFAC class TrmE-Era-EngA-EngB-Septin-like GTPase superfamily. EngB GTPase family. Mg(2+) serves as cofactor.

In terms of biological role, necessary for normal cell division and for the maintenance of normal septation. This Bacteroides fragilis (strain YCH46) protein is Probable GTP-binding protein EngB.